We begin with the raw amino-acid sequence, 430 residues long: Probable transporter SCO4007 (430 aa).

A compositionally biased stretch (low complexity) spans 1–17 (MPSSPSSTTPAPTSTPA). A disordered region spans residues 1–26 (MPSSPSSTTPAPTSTPAARREPSGKG). A run of 11 helical transmembrane segments spans residues 34-54 (LFLP…YLAA), 70-90 (AVAW…LFFA), 101-121 (LVAA…ASAG), 126-146 (AGAV…VPLV), 159-179 (VAAV…LGGL), 188-208 (AVFV…AYIL), 244-264 (AGMY…LTEG), 275-295 (GLFG…GGLV), 315-335 (VPLF…AVLV), 362-382 (TAYV…AGPA), and 383-403 (FGHW…VLGW).

The protein belongs to the major facilitator superfamily.

It localises to the cell membrane. The protein is Probable transporter SCO4007 of Streptomyces coelicolor (strain ATCC BAA-471 / A3(2) / M145).